Here is a 694-residue protein sequence, read N- to C-terminus: Protein NPGR1 (694 aa).

Residues 12–40 form a disordered region; that stretch reads FEDQPGSPESLATRDFSASGLSSRNGGGD. 9 TPR repeats span residues 32–65, 66–101, 135–168, 188–221, 307–340, 551–584, 585–618, 620–654, and 655–688; these read LSSR…SLNY, EEAR…TPRI, LEAI…VENA, QKAL…PWNL, GERW…SESR, TEAW…CYYS, PRGW…EPDH, PSIV…DPRN, and HDAW…ELSA.

As to quaternary structure, interacts with calmodulin in a calcium-dependent manner. As to expression, expressed in pollen, flowers, fruits and leaves.

This is Protein NPGR1 from Arabidopsis thaliana (Mouse-ear cress).